Reading from the N-terminus, the 799-residue chain is RasGAP-activating-like protein 1 (799 aa).

2 consecutive C2 domains span residues 1-105 (MAKS…DSWI) and 116-231 (VQGE…NGWF). Ca(2+)-binding residues include aspartate 21, aspartate 27, aspartate 74, aspartate 76, aspartate 82, aspartate 149, aspartate 155, aspartate 202, aspartate 204, and aspartate 210. The Ras-GAP domain maps to 316–544 (GLAGPFLDYL…SRVRDFLDQL (229 aa)). Threonine 400 is modified (phosphothreonine). In terms of domain architecture, PH spans 565-672 (TIVREGFLLK…WLSALRKASA (108 aa)). The segment at 674 to 710 (NPGKLVACHPGAFRSGRWTCCLQAERSAAGCSRTHSA) adopts a Btk-type zinc-finger fold. Residues histidine 682, cysteine 693, cysteine 694, and cysteine 704 each coordinate Zn(2+).

It depends on Ca(2+) as a cofactor.

Probable inhibitory regulator of the Ras-cyclic AMP pathway. Plays a role in dendrite formation by melanocytes. The polypeptide is RasGAP-activating-like protein 1 (Mus musculus (Mouse)).